Here is a 331-residue protein sequence, read N- to C-terminus: Peroxidase 49 (331 aa).

A signal peptide spans 1-22 (MARLTSFLLLLSLICFVPLCLC). 4 cysteine pairs are disulfide-bonded: C39–C119, C72–C77, C125–C326, and C204–C236. The active-site Proton acceptor is the H70. Ca(2+)-binding residues include D71, V74, G76, D78, and S80. Position 167 (P167) interacts with substrate. N170 carries an N-linked (GlcNAc...) asparagine glycan. A heme b-binding site is contributed by H197. T198 serves as a coordination point for Ca(2+). N213 is a glycosylation site (N-linked (GlcNAc...) asparagine). Ca(2+)-binding residues include D249, S252, and D257.

This sequence belongs to the peroxidase family. Classical plant (class III) peroxidase subfamily. Heme b serves as cofactor. The cofactor is Ca(2+).

The protein resides in the secreted. It catalyses the reaction 2 a phenolic donor + H2O2 = 2 a phenolic radical donor + 2 H2O. Its function is as follows. Removal of H(2)O(2), oxidation of toxic reductants, biosynthesis and degradation of lignin, suberization, auxin catabolism, response to environmental stresses such as wounding, pathogen attack and oxidative stress. These functions might be dependent on each isozyme/isoform in each plant tissue. This is Peroxidase 49 (PER49) from Arabidopsis thaliana (Mouse-ear cress).